Consider the following 757-residue polypeptide: MDVNPTLLFLKVPAQNAISTTFPYTGDPPYSHGTGTGYTMDTVNRTHQYSEKGKWTTNTETGEPQLNPIDGPLPEDNEQSGYAQQDCVLEAMAFLEESHPGIFENSCLETMEVVQQTRVDRLTQGRQTYDWTLNRNQPAATALANTIEVFRSNGLTANESGRLIDFLKDVMESMDKEEMEITTHFQRKRRVRDNMTKKMVTQRTIGKKKQRVNKRSYLIRALTLNTMTKDAERGKLKRRAIATPGMQIRGFVYFVETLARSICEKLEQSGLPVGGNEKKAKLANVVRKMMTNSQDTELSFTITGDNTKWNENQNPRMFLAMMTYITKNQPEWFRNILSIAPIMFSNKMARLGKGYMFESKRMKLRTQIPAEMLASIDLKYFNESTRKKIEKIRPLLRDGTASLSPGMMMGMFNMLSTVLGVSILNLGQKKYTKTTYWWDGLQSSDDFALIVNAPNHEGIQAGVDRFYRTCKLVGINMSKKKSYINRTGTFEFTSFFYRYGFVANFSMELPSFGVSGINESADMSIGVTVIKNNMINNDLGPATAQMALQLFIKDYRYTYRCHRGHTQIQTRRSFELKKLWEQTRSKAGLFVSDGGPNLYNIRNLHIPEVCLKWELMDEDYQGRLCNPLNPFVSHKEIESVNNAVVMPAHGPAKSMEYDAVATTHSWIPKRNRSILNTSQRGILEDGQMYQKCCNLFEKFFPSSSYRRPVGISSMVEAMVSRARIDARIDFEAGRIKKEEFSEIMKICSTIEELRRQK.

The disordered stretch occupies residues Ser-50–Gln-79. The segment covering Trp-55–Pro-64 has biased composition (polar residues). 2 consecutive short sequence motifs (nuclear localization signal) follow at residues Arg-187 to Met-195 and Arg-203 to Ser-216. Residues Arg-249–Glu-256 are promoter-binding site. The region spanning Val-286–Tyr-483 is the RdRp catalytic domain.

It belongs to the influenza viruses polymerase PB1 family. As to quaternary structure, influenza RNA polymerase is composed of three subunits: PB1, PB2 and PA. Interacts (via N-terminus) with PA (via C-terminus). Interacts (via C-terminus) with PB2 (via N-terminus); this interaction is essential for transcription initiation. In terms of processing, phosphorylated by host PRKCA.

The protein resides in the host nucleus. It localises to the host cytoplasm. It catalyses the reaction RNA(n) + a ribonucleoside 5'-triphosphate = RNA(n+1) + diphosphate. Functionally, RNA-dependent RNA polymerase which is responsible for replication and transcription of virus RNA segments. The transcription of viral mRNAs occurs by a unique mechanism called cap-snatching. 5' methylated caps of cellular mRNAs are cleaved after 10-13 nucleotides by PA. In turn, these short capped RNAs are used as primers by PB1 for transcription of viral mRNAs. During virus replication, PB1 initiates RNA synthesis and copy vRNA into complementary RNA (cRNA) which in turn serves as a template for the production of more vRNAs. This chain is RNA-directed RNA polymerase catalytic subunit, found in Influenza A virus (strain A/Dunedin/4/1973 H3N2).